The chain runs to 129 residues: Large ribosomal subunit protein mL53 (129 aa).

The transit peptide at 1–50 directs the protein to the mitochondrion; it reads MREKLNLLAKLKSVVYKFDPLNPNTRSIRSFIPLTTCKRSRQLAPECSIS.

The protein belongs to the mitochondrion-specific ribosomal protein mL53 family.

It localises to the mitochondrion. The sequence is that of Large ribosomal subunit protein mL53 (mrpl53) from Dictyostelium discoideum (Social amoeba).